We begin with the raw amino-acid sequence, 454 residues long: Bifunctional protein GlmU (454 aa).

A pyrophosphorylase region spans residues 1 to 228 (MTLPLHVVIL…PQHVEGANDP (228 aa)). UDP-N-acetyl-alpha-D-glucosamine-binding positions include 10-13 (LAAG), K24, Q76, 81-82 (GT), 103-105 (YGD), G138, E153, N168, and N226. Residue D105 coordinates Mg(2+). N226 is a binding site for Mg(2+). Residues 229–249 (WQLAQLERAWQLRAARTLCLQ) form a linker region. The segment at 250–454 (GVRMADPARV…IEGWKRPTKK (205 aa)) is N-acetyltransferase. Positions 332 and 350 each coordinate UDP-N-acetyl-alpha-D-glucosamine. H362 serves as the catalytic Proton acceptor. UDP-N-acetyl-alpha-D-glucosamine is bound by residues Y365 and N376. Residues A379, 385 to 386 (NY), S404, A422, and R439 contribute to the acetyl-CoA site.

In the N-terminal section; belongs to the N-acetylglucosamine-1-phosphate uridyltransferase family. The protein in the C-terminal section; belongs to the transferase hexapeptide repeat family. As to quaternary structure, homotrimer. The cofactor is Mg(2+).

It localises to the cytoplasm. It catalyses the reaction alpha-D-glucosamine 1-phosphate + acetyl-CoA = N-acetyl-alpha-D-glucosamine 1-phosphate + CoA + H(+). The enzyme catalyses N-acetyl-alpha-D-glucosamine 1-phosphate + UTP + H(+) = UDP-N-acetyl-alpha-D-glucosamine + diphosphate. The protein operates within nucleotide-sugar biosynthesis; UDP-N-acetyl-alpha-D-glucosamine biosynthesis; N-acetyl-alpha-D-glucosamine 1-phosphate from alpha-D-glucosamine 6-phosphate (route II): step 2/2. Its pathway is nucleotide-sugar biosynthesis; UDP-N-acetyl-alpha-D-glucosamine biosynthesis; UDP-N-acetyl-alpha-D-glucosamine from N-acetyl-alpha-D-glucosamine 1-phosphate: step 1/1. It participates in bacterial outer membrane biogenesis; LPS lipid A biosynthesis. Its function is as follows. Catalyzes the last two sequential reactions in the de novo biosynthetic pathway for UDP-N-acetylglucosamine (UDP-GlcNAc). The C-terminal domain catalyzes the transfer of acetyl group from acetyl coenzyme A to glucosamine-1-phosphate (GlcN-1-P) to produce N-acetylglucosamine-1-phosphate (GlcNAc-1-P), which is converted into UDP-GlcNAc by the transfer of uridine 5-monophosphate (from uridine 5-triphosphate), a reaction catalyzed by the N-terminal domain. In Xanthomonas euvesicatoria pv. vesicatoria (strain 85-10) (Xanthomonas campestris pv. vesicatoria), this protein is Bifunctional protein GlmU.